Consider the following 98-residue polypeptide: NADH-ubiquinone oxidoreductase chain 4L (98 aa).

The next 3 helical transmembrane spans lie at 1–21, 29–49, and 61–81; these read MALTYMNMALAFTVSLLGLLM, SLLCLEGMMLSLFVTMSLTIL, and IILLVFAACEAALGLSLLVMV.

It belongs to the complex I subunit 4L family. Core subunit of respiratory chain NADH dehydrogenase (Complex I) which is composed of 45 different subunits.

The protein localises to the mitochondrion inner membrane. It catalyses the reaction a ubiquinone + NADH + 5 H(+)(in) = a ubiquinol + NAD(+) + 4 H(+)(out). Functionally, core subunit of the mitochondrial membrane respiratory chain NADH dehydrogenase (Complex I) which catalyzes electron transfer from NADH through the respiratory chain, using ubiquinone as an electron acceptor. Part of the enzyme membrane arm which is embedded in the lipid bilayer and involved in proton translocation. The polypeptide is NADH-ubiquinone oxidoreductase chain 4L (MT-ND4L) (Pteropus dasymallus (Ryukyu flying fox)).